The chain runs to 151 residues: Transcriptional regulator MraZ (151 aa).

2 SpoVT-AbrB domains span residues 5–52 and 81–124; these read ANAI…PLDE and AVDL…DEDA.

The protein belongs to the MraZ family. In terms of assembly, forms oligomers.

The protein localises to the cytoplasm. It is found in the nucleoid. In Pseudomonas fluorescens (strain SBW25), this protein is Transcriptional regulator MraZ.